Consider the following 158-residue polypeptide: MGRFIFVSFGLLVLFLSLSGTGAGLHCPSDWYYYDQHCYRIFNEEMNWEDAEWFCTKQAKGAHLVSIKSAKEADFVAWMVTQNIEESFSHVSIGLRVQNKEKQCSTKWSDGSSVSYDNLLDLYITKCSLLKKETGFRKWFVASCIGKIPFVCKFPPQC.

The first 23 residues, 1-23, serve as a signal peptide directing secretion; it reads MGRFIFVSFGLLVLFLSLSGTGA. 3 disulfide bridges follow: C27/C38, C55/C152, and C127/C144. Positions 34 to 158 constitute a C-type lectin domain; the sequence is YDQHCYRIFN…PFVCKFPPQC (125 aa).

This sequence belongs to the snaclec family. Tetramer of heterodimers of alpha and beta subunits (alphabeta)(4); disulfide-linked. In terms of tissue distribution, expressed by the venom gland.

The protein resides in the secreted. Its function is as follows. Snake venom lectin that activates platelets by binding to the platelet collagen receptor glycoprotein VI (GP6). The indirect activation of integrin alpha-IIb/beta-3 (ITGA2B/ITGB3) also induced by the toxin is upstream the cytoskeletal translocation of GPIb, FcRgamma (FCER1G) and 14-3-3zeta (YWHAZ). In Crotalus durissus terrificus (South American rattlesnake), this protein is Snaclec convulxin subunit alpha.